Reading from the N-terminus, the 272-residue chain is Undecaprenyl-diphosphatase (272 aa).

Transmembrane regions (helical) follow at residues 1 to 21 (MSTL…FLPI), 39 to 59 (QGLA…MMYF), 91 to 111 (WWIL…KDFI), 117 to 137 (SALV…FADI), 151 to 171 (LGLK…IPGT), 196 to 216 (FLLS…KLIL), 228 to 248 (LGSL…LILL), and 251 to 271 (LGMM…LWFI).

The protein belongs to the UppP family.

It localises to the cell inner membrane. It carries out the reaction di-trans,octa-cis-undecaprenyl diphosphate + H2O = di-trans,octa-cis-undecaprenyl phosphate + phosphate + H(+). In terms of biological role, catalyzes the dephosphorylation of undecaprenyl diphosphate (UPP). Confers resistance to bacitracin. In Colwellia psychrerythraea (strain 34H / ATCC BAA-681) (Vibrio psychroerythus), this protein is Undecaprenyl-diphosphatase.